The sequence spans 262 residues: Hydroxyethylthiazole kinase (262 aa).

Residue methionine 43 participates in substrate binding. 2 residues coordinate ATP: arginine 118 and threonine 164. Residue alanine 191 participates in substrate binding.

The protein belongs to the Thz kinase family. Mg(2+) is required as a cofactor.

It catalyses the reaction 5-(2-hydroxyethyl)-4-methylthiazole + ATP = 4-methyl-5-(2-phosphooxyethyl)-thiazole + ADP + H(+). It participates in cofactor biosynthesis; thiamine diphosphate biosynthesis; 4-methyl-5-(2-phosphoethyl)-thiazole from 5-(2-hydroxyethyl)-4-methylthiazole: step 1/1. Its function is as follows. Catalyzes the phosphorylation of the hydroxyl group of 4-methyl-5-beta-hydroxyethylthiazole (THZ). The protein is Hydroxyethylthiazole kinase of Cereibacter sphaeroides (strain ATCC 17029 / ATH 2.4.9) (Rhodobacter sphaeroides).